Here is a 326-residue protein sequence, read N- to C-terminus: Lipopolysaccharide heptosyltransferase 1 (326 aa).

Thr-187, Thr-188, Lys-192, Glu-222, and Met-242 together coordinate ADP. Thr-187, Thr-188, Lys-192, Glu-222, Met-242, Asp-261, Thr-262, Gly-263, and His-266 together coordinate ADP-L-glycero-beta-D-manno-heptose. Positions 262 and 263 each coordinate ADP.

It belongs to the glycosyltransferase 9 family. Monomer.

Its subcellular location is the cell inner membrane. The enzyme catalyses an alpha-Kdo-(2-&gt;4)-alpha-Kdo-(2-&gt;6)-lipid A + ADP-L-glycero-beta-D-manno-heptose = an L-alpha-D-Hep-(1-&gt;5)-[alpha-Kdo-(2-&gt;4)]-alpha-Kdo-(2-&gt;6)-lipid A + ADP + H(+). It catalyses the reaction alpha-Kdo-(2-&gt;4)-alpha-Kdo-(2-&gt;6)-lipid A (E. coli) + ADP-L-glycero-beta-D-manno-heptose = L-alpha-D-Hep-(1-&gt;5)-[alpha-Kdo-(2-&gt;4)]-alpha-Kdo-(2-&gt;6)-lipid A (E. coli) + ADP + H(+). It participates in bacterial outer membrane biogenesis; LPS core biosynthesis. Its activity is regulated as follows. Inhibited by ADP-L-glycero-beta-D-gluco-2-deoxy-2-fluoro-heptose (ADP-2F-heptose), a non-cleavable analog of the substrate ADP-L-glycero-beta-D-manno-heptose. Its function is as follows. Glycosyltransferase involved in the biosynthesis of the core oligosaccharide region of lipopolysaccharide (LPS). Catalyzes the addition of the first heptose unit to one 3-deoxy-D-manno-octulosonic acid (Kdo) residue of the Kdo2-lipid A module. This Escherichia coli O18:K1:H7 (strain RS218 / NMEC) protein is Lipopolysaccharide heptosyltransferase 1.